The primary structure comprises 505 residues: ATP synthase subunit alpha (505 aa).

170–177 (GDRQTGKS) is a binding site for ATP.

The protein belongs to the ATPase alpha/beta chains family. As to quaternary structure, F-type ATPases have 2 components, CF(1) - the catalytic core - and CF(0) - the membrane proton channel. CF(1) has five subunits: alpha(3), beta(3), gamma(1), delta(1), epsilon(1). CF(0) has four main subunits: a(1), b(1), b'(1) and c(9-12).

The protein localises to the cellular thylakoid membrane. The catalysed reaction is ATP + H2O + 4 H(+)(in) = ADP + phosphate + 5 H(+)(out). Produces ATP from ADP in the presence of a proton gradient across the membrane. The alpha chain is a regulatory subunit. The polypeptide is ATP synthase subunit alpha (Prochlorococcus marinus (strain MIT 9215)).